The following is a 341-amino-acid chain: Ribosomal RNA small subunit methyltransferase H (341 aa).

S-adenosyl-L-methionine-binding positions include 47–49 (GGY), D64, F91, D109, and Q116.

This sequence belongs to the methyltransferase superfamily. RsmH family.

The protein resides in the cytoplasm. The catalysed reaction is cytidine(1402) in 16S rRNA + S-adenosyl-L-methionine = N(4)-methylcytidine(1402) in 16S rRNA + S-adenosyl-L-homocysteine + H(+). Its function is as follows. Specifically methylates the N4 position of cytidine in position 1402 (C1402) of 16S rRNA. This Agrobacterium fabrum (strain C58 / ATCC 33970) (Agrobacterium tumefaciens (strain C58)) protein is Ribosomal RNA small subunit methyltransferase H.